A 167-amino-acid chain; its full sequence is Translationally-controlled tumor protein homolog (167 aa).

The TCTP domain maps to 1–167; it reads MKLFTDIISN…WKDGLRETKI (167 aa).

This sequence belongs to the TCTP family.

It localises to the cytoplasm. The protein resides in the cytoskeleton. Functionally, involved in protein synthesis. Involved in microtubule stabilization. The protein is Translationally-controlled tumor protein homolog of Mycosarcoma maydis (Corn smut fungus).